The following is a 183-amino-acid chain: MDIDPYKEFGATVELLSFLPSDFFPSVRDLLDTAAALYRDALESPEHCSPHHTALRQAILCWGDLMTLATWVGTNLEDPASRDLVVSYVNTNVGLKFRQLLWFHISCLTFGRETVLEYLVSFGVWIRTPPAYRPPNAPILSTLPETTVVRRRGRSPRRRTPSPRRRRSQSPRRRRSQSRESQC.

Residues 136-183 are disordered; sequence NAPILSTLPETTVVRRRGRSPRRRTPSPRRRRSQSPRRRRSQSRESQC. Residues 149-176 show a composition bias toward basic residues; it reads VRRRGRSPRRRTPSPRRRRSQSPRRRRS. Residues serine 155, serine 162, and serine 170 each carry the phosphoserine; by host modification. A 1; half-length repeat occupies 155–161; sequence SPRRRTP. Positions 155–177 are 3 X 8 AA repeats of S-P-R-R-R-[PR]-S-Q; sequence SPRRRTPSPRRRRSQSPRRRRSQ. The Bipartite nuclear localization signal signature appears at 158-175; that stretch reads RRTPSPRRRRSQSPRRRR. Repeat copies occupy residues 162-169 and 170-177. Residues 177–183 form an RNA binding region; the sequence is QSRESQC.

The protein belongs to the orthohepadnavirus core antigen family. As to quaternary structure, homodimerizes, then multimerizes. Interacts with cytosol exposed regions of viral L glycoprotein present in the reticulum-to-Golgi compartment. Interacts with human FLNB. Phosphorylated form interacts with host importin alpha; this interaction depends on the exposure of the NLS, which itself depends upon genome maturation and/or phosphorylation of the capsid protein. Interacts with host NUP153. In terms of processing, phosphorylated by host SRPK1, SRPK2, and maybe protein kinase C or GAPDH. Phosphorylation is critical for pregenomic RNA packaging. Protein kinase C phosphorylation is stimulated by HBx protein and may play a role in transport of the viral genome to the nucleus at the late step during the viral replication cycle.

It localises to the virion. Its subcellular location is the host cytoplasm. Its function is as follows. Self assembles to form an icosahedral capsid. Most capsids appear to be large particles with an icosahedral symmetry of T=4 and consist of 240 copies of capsid protein, though a fraction forms smaller T=3 particles consisting of 180 capsid proteins. Entering capsids are transported along microtubules to the nucleus. Phosphorylation of the capsid is thought to induce exposure of nuclear localization signal in the C-terminal portion of the capsid protein that allows binding to the nuclear pore complex via the importin (karyopherin-) alpha and beta. Capsids are imported in intact form through the nuclear pore into the nuclear basket, where it probably binds NUP153. Only capsids that contain the mature viral genome can release the viral DNA and capsid protein into the nucleoplasm. Immature capsids get stuck in the basket. Capsids encapsulate the pre-genomic RNA and the P protein. Pre-genomic RNA is reverse-transcribed into DNA while the capsid is still in the cytoplasm. The capsid can then either be directed to the nucleus, providing more genomes for transcription, or bud through the endoplasmic reticulum to provide new virions. In Homo sapiens (Human), this protein is Capsid protein.